A 356-amino-acid polypeptide reads, in one-letter code: Vesicular integral-membrane protein VIP36 (356 aa).

Residues 1 to 44 form the signal peptide; the sequence is MAAEGWIWRWGWGRRCLGRPGLPGPGPGPATPLFLLLLLGPVVA. Residues 45–322 are Lumenal-facing; sequence DITDGNSEHL…FRSGPLTGWR (278 aa). Residues 52-276 enclose the L-type lectin-like domain; that stretch reads EHLKREHSLI…DIISMKLFQL (225 aa). Residues Ser-96 and Asp-131 each contribute to the a carbohydrate site. Residues Asp-162, Tyr-164, and Asn-166 each contribute to the Ca(2+) site. Residue 164-166 coordinates a carbohydrate; it reads YPN. The N-linked (GlcNAc...) asparagine glycan is linked to Asn-183. His-190 is an a carbohydrate binding site. Ca(2+) is bound at residue Asp-193. A disulfide bridge connects residues Cys-202 and Cys-239. 260-262 is an a carbohydrate binding site; it reads GDL. A helical transmembrane segment spans residues 323-345; sequence VFLLLLCALLGIIVCAVVGAVVF. Residues 346–356 are Cytoplasmic-facing; the sequence is QKRQERNKRFY.

As to quaternary structure, monomer. Ca(2+) is required as a cofactor. Expressed in kidney, liver, intestine, lung, spleen and heart. Low expression in brain.

It localises to the golgi apparatus membrane. Plays a role as an intracellular lectin in the early secretory pathway. Interacts with N-acetyl-D-galactosamine and high-mannose type glycans and may also bind to O-linked glycans. Involved in the transport and sorting of glycoproteins carrying high mannose-type glycans. The protein is Vesicular integral-membrane protein VIP36 (LMAN2) of Canis lupus familiaris (Dog).